Reading from the N-terminus, the 335-residue chain is Glycerol-3-phosphate dehydrogenase [NAD(P)+] (335 aa).

Residues W15, R36, and K109 each coordinate NADPH. 3 residues coordinate sn-glycerol 3-phosphate: K109, G137, and S139. Residue A141 participates in NADPH binding. Residues K192, D245, S255, R256, and N257 each coordinate sn-glycerol 3-phosphate. The active-site Proton acceptor is K192. R256 contacts NADPH. Positions 279 and 281 each coordinate NADPH.

The protein belongs to the NAD-dependent glycerol-3-phosphate dehydrogenase family.

The protein resides in the cytoplasm. It carries out the reaction sn-glycerol 3-phosphate + NAD(+) = dihydroxyacetone phosphate + NADH + H(+). The enzyme catalyses sn-glycerol 3-phosphate + NADP(+) = dihydroxyacetone phosphate + NADPH + H(+). It participates in membrane lipid metabolism; glycerophospholipid metabolism. In terms of biological role, catalyzes the reduction of the glycolytic intermediate dihydroxyacetone phosphate (DHAP) to sn-glycerol 3-phosphate (G3P), the key precursor for phospholipid synthesis. The protein is Glycerol-3-phosphate dehydrogenase [NAD(P)+] of Beijerinckia indica subsp. indica (strain ATCC 9039 / DSM 1715 / NCIMB 8712).